Reading from the N-terminus, the 562-residue chain is Malate synthase (562 aa).

Catalysis depends on Arg177, which acts as the Proton acceptor. Asp463 functions as the Proton donor in the catalytic mechanism. A Microbody targeting signal motif is present at residues 560-562 (SRL).

This sequence belongs to the malate synthase family.

It is found in the glyoxysome. It carries out the reaction glyoxylate + acetyl-CoA + H2O = (S)-malate + CoA + H(+). Its pathway is carbohydrate metabolism; glyoxylate cycle; (S)-malate from isocitrate: step 2/2. Does not seem to be essential for lipid utilization and gluconeogenesis in seedlings. The chain is Malate synthase from Arabidopsis thaliana (Mouse-ear cress).